The following is a 212-amino-acid chain: Protein-L-isoaspartate O-methyltransferase (212 aa).

Ser61 is an active-site residue.

It belongs to the methyltransferase superfamily. L-isoaspartyl/D-aspartyl protein methyltransferase family.

It localises to the cytoplasm. It catalyses the reaction [protein]-L-isoaspartate + S-adenosyl-L-methionine = [protein]-L-isoaspartate alpha-methyl ester + S-adenosyl-L-homocysteine. Catalyzes the methyl esterification of L-isoaspartyl residues in peptides and proteins that result from spontaneous decomposition of normal L-aspartyl and L-asparaginyl residues. It plays a role in the repair and/or degradation of damaged proteins. This chain is Protein-L-isoaspartate O-methyltransferase, found in Pseudoalteromonas atlantica (strain T6c / ATCC BAA-1087).